The following is a 2392-amino-acid chain: Protein Ycf2 (2392 aa).

1658–1665 (GPTEIGKS) serves as a coordination point for ATP.

This sequence belongs to the Ycf2 family.

The protein localises to the plastid. It is found in the chloroplast stroma. Its function is as follows. Probable ATPase of unknown function. Its presence in a non-photosynthetic plant (Epifagus virginiana) and experiments in tobacco indicate that it has an essential function which is probably not related to photosynthesis. This is Protein Ycf2 from Anthoceros angustus (Hornwort).